A 559-amino-acid chain; its full sequence is Formate--tetrahydrofolate ligase (559 aa).

Residue 68-75 (TPAGEGKT) participates in ATP binding.

It belongs to the formate--tetrahydrofolate ligase family.

The enzyme catalyses (6S)-5,6,7,8-tetrahydrofolate + formate + ATP = (6R)-10-formyltetrahydrofolate + ADP + phosphate. The protein operates within one-carbon metabolism; tetrahydrofolate interconversion. The polypeptide is Formate--tetrahydrofolate ligase (Sinorhizobium fredii (strain NBRC 101917 / NGR234)).